We begin with the raw amino-acid sequence, 126 residues long: Large ribosomal subunit protein bL12 (126 aa).

It belongs to the bacterial ribosomal protein bL12 family. Homodimer. Part of the ribosomal stalk of the 50S ribosomal subunit. Forms a multimeric L10(L12)X complex, where L10 forms an elongated spine to which 2 to 4 L12 dimers bind in a sequential fashion. Binds GTP-bound translation factors.

Forms part of the ribosomal stalk which helps the ribosome interact with GTP-bound translation factors. Is thus essential for accurate translation. The polypeptide is Large ribosomal subunit protein bL12 (Geotalea daltonii (strain DSM 22248 / JCM 15807 / FRC-32) (Geobacter daltonii)).